The chain runs to 323 residues: Sphingolipid delta(4)-desaturase/C4-monooxygenase DES2 (323 aa).

The N-myristoyl glycine moiety is linked to residue glycine 2. The next 2 membrane-spanning stretches (helical) occupy residues 41-61 and 68-88; these read PHIK…CWLV and WLLF…TLAI. A Histidine box-1 motif is present at residues 89–93; that stretch reads HDISH. The tract at residues 95–99 is required for C4-hydroxylase activity; sequence TAFGT. Positions 128–132 match the Histidine box-2 motif; the sequence is HVDHH. A helical transmembrane segment spans residues 210-231; it reads VYLLGSSLLGLGLHPISGHFVA. A Histidine box-3 motif is present at residues 259 to 263; the sequence is HMEHH.

The protein belongs to the fatty acid desaturase type 1 family. DEGS subfamily. In terms of tissue distribution, highly expressed in intestinal crypt cells and adjacent epithelial cells (at protein level).

It localises to the endoplasmic reticulum membrane. It catalyses the reaction a dihydroceramide + 2 Fe(II)-[cytochrome b5] + O2 + 2 H(+) = a phytoceramide + 2 Fe(III)-[cytochrome b5] + H2O. The catalysed reaction is an N-acylsphinganine + 2 Fe(II)-[cytochrome b5] + O2 + 2 H(+) = an N-acylsphing-4-enine + 2 Fe(III)-[cytochrome b5] + 2 H2O. The enzyme catalyses an N-acylsphinganine + 2 Fe(II)-[cytochrome b5] + O2 + 2 H(+) = an N-acyl-(4R)-4-hydroxysphinganine + 2 Fe(III)-[cytochrome b5] + H2O. It carries out the reaction N-octanoylsphinganine + 2 Fe(II)-[cytochrome b5] + O2 + 2 H(+) = N-octanoyl-4-hydroxysphinganine + 2 Fe(III)-[cytochrome b5] + H2O. The protein operates within membrane lipid metabolism; sphingolipid biosynthesis. Its function is as follows. Bifunctional enzyme which acts both as a sphingolipid delta(4)-desaturase and a sphingolipid C4-monooxygenase. The protein is Sphingolipid delta(4)-desaturase/C4-monooxygenase DES2 of Mus musculus (Mouse).